Consider the following 334-residue polypeptide: Ketol-acid reductoisomerase (NADP(+)) (334 aa).

The region spanning 1–181 (MNIYYDKNAD…GGGRTGILET (181 aa)) is the KARI N-terminal Rossmann domain. NADP(+) contacts are provided by residues 24-27 (YGSQ), Arg47, Ser50, Ser52, and 82-85 (DEFQ). Residue His107 is part of the active site. An NADP(+)-binding site is contributed by Gly133. The KARI C-terminal knotted domain occupies 182–323 (SFKDETETDL…ESLRSMMPWI (142 aa)). 4 residues coordinate Mg(2+): Asp190, Glu194, Glu226, and Glu230. Residue Ser251 coordinates substrate.

Belongs to the ketol-acid reductoisomerase family. Requires Mg(2+) as cofactor.

It carries out the reaction (2R)-2,3-dihydroxy-3-methylbutanoate + NADP(+) = (2S)-2-acetolactate + NADPH + H(+). The enzyme catalyses (2R,3R)-2,3-dihydroxy-3-methylpentanoate + NADP(+) = (S)-2-ethyl-2-hydroxy-3-oxobutanoate + NADPH + H(+). Its pathway is amino-acid biosynthesis; L-isoleucine biosynthesis; L-isoleucine from 2-oxobutanoate: step 2/4. The protein operates within amino-acid biosynthesis; L-valine biosynthesis; L-valine from pyruvate: step 2/4. Involved in the biosynthesis of branched-chain amino acids (BCAA). Catalyzes an alkyl-migration followed by a ketol-acid reduction of (S)-2-acetolactate (S2AL) to yield (R)-2,3-dihydroxy-isovalerate. In the isomerase reaction, S2AL is rearranged via a Mg-dependent methyl migration to produce 3-hydroxy-3-methyl-2-ketobutyrate (HMKB). In the reductase reaction, this 2-ketoacid undergoes a metal-dependent reduction by NADPH to yield (R)-2,3-dihydroxy-isovalerate. The chain is Ketol-acid reductoisomerase (NADP(+)) from Vesicomyosocius okutanii subsp. Calyptogena okutanii (strain HA).